Consider the following 3004-residue polypeptide: Guanylate cyclase beta (3004 aa).

At 1 to 66 the chain is on the cytoplasmic side; sequence MKETDKIKSE…FSLYNFIRRL (66 aa). The chain crosses the membrane as a helical span at residues 67 to 87; the sequence is ISLDAVIVYTLFMTVYIFSEI. Over 88–94 the chain is Extracellular; that stretch reads SQGITKK. The helical transmembrane segment at 95–115 threads the bilayer; the sequence is YLFVDTAISLFLNIGILVVIE. Residues 116–300 lie on the Cytoplasmic side of the membrane; that stretch reads SLFELKLLKD…TFCIKMNNVV (185 aa). A helical transmembrane segment spans residues 301–321; that stretch reads YYLIFMYILFVLLSIIIKAIF. At 322–334 the chain is on the extracellular side; sequence YRKGKLLENSNDT. N-linked (GlcNAc...) asparagine glycosylation occurs at N332. The helical transmembrane segment at 335–355 threads the bilayer; it reads FFTVLEDFIGLYILVLPVMLY. At 356 to 991 the chain is on the cytoplasmic side; the sequence is SEKSLIYIIQ…GRLNRFSLCR (636 aa). Residues 992-1012 traverse the membrane as a helical segment; the sequence is AFLWIIYLKVMIGSFYFFHNF. The Extracellular portion of the chain corresponds to 1013-1022; sequence DNFFSGSSIS. A helical membrane pass occupies residues 1023–1043; the sequence is SILYSQTAFAIFHYSLIVAFA. Over 1044–1072 the chain is Cytoplasmic; sequence SYEIDIPYKFIRNFPYIYQLARRKYFLNN. A helical membrane pass occupies residues 1073–1093; sequence TIIFLNIVESIFSSFISYYIL. Topologically, residues 1094–1105 are extracellular; sequence RGNLFNLITHRK. Residues 1106 to 1126 form a helical membrane-spanning segment; that stretch reads FTFHIFVLNFFLISEKILLFS. At 1127–1130 the chain is on the cytoplasmic side; it reads KTWH. The helical transmembrane segment at 1131 to 1151 threads the bilayer; it reads IFFFIMTIIIVSILFIYINIY. The Extracellular segment spans residues 1152 to 1171; that stretch reads TLVDCLITGKCEFSLFDPED. A helical membrane pass occupies residues 1172 to 1192; that stretch reads SYFWISLLPILYINFIIDKFM. Topologically, residues 1193-1297 are cytoplasmic; it reads KFVKNKIYPD…YEKRNKLKLR (105 aa). The chain crosses the membrane as a helical span at residues 1298–1318; it reads IIILLLFIIFLITFTIQIIIS. Residues 1319 to 1327 are Extracellular-facing; that stretch reads KFIEKKLHS. A helical transmembrane segment spans residues 1328 to 1348; sequence LSYLTVIYYIVAVLYLIKILI. Topologically, residues 1349-1353 are cytoplasmic; the sequence is RNKTN. The chain crosses the membrane as a helical span at residues 1354 to 1374; that stretch reads YTYFYIIGKLLLVIGYLLEIS. Residues 1375–1394 lie on the Extracellular side of the membrane; it reads ENSVNNIINMLVTYSFTVCY. Residues 1395–1415 traverse the membrane as a helical segment; that stretch reads IFFISFKILEGLVMCIIILSI. Residues 1416-1457 lie on the Cytoplasmic side of the membrane; it reads AIWVYYHKNNNLNAMCTDFCDNPYTSLDNLEYINISCICKQQ. The chain crosses the membrane as a helical span at residues 1458–1478; it reads IFTFLICTLSFTLICLFMKYY. Over 1479–1500 the chain is Extracellular; that stretch reads EIYYLKKKFLTRYKQKVNLGKQ. Residues 1501–1521 traverse the membrane as a helical segment; the sequence is IEILHTMLPSFLVEYLLVSDP. Topologically, residues 1522–2563 are cytoplasmic; that stretch reads KADGIMVGKN…EIINIDLTKK (1042 aa). One can recognise a Guanylate cyclase 1 domain in the interval 1541-1696; sequence SVIFCDIDDF…DTVNTASRMK (156 aa). The span at 2463 to 2476 shows a compositional bias: polar residues; the sequence is TMSNSKSGQTNITT. A disordered region spans residues 2463–2491; it reads TMSNSKSGQTNITTDNKKSQIKKNGDVNK. Positions 2477 to 2488 are enriched in basic and acidic residues; it reads DNKKSQIKKNGD. A helical membrane pass occupies residues 2564–2584; that stretch reads LIIIFVISELILSLCNVIELS. Residues 2585 to 2594 lie on the Extracellular side of the membrane; the sequence is YYENKETPND. The helical transmembrane segment at 2595 to 2615 threads the bilayer; that stretch reads FIVIIWLIRSIYLFTITFIWL. Over 2616-2634 the chain is Cytoplasmic; sequence LLKTKLKEYKDNSSKMMWT. A helical membrane pass occupies residues 2635–2655; it reads TFILNIFLSSWGIIMIDLACI. At 2656-2667 the chain is on the extracellular side; sequence HYSNLVGNSRER. Residues 2668–2688 form a helical membrane-spanning segment; sequence SIFFMKDATELIISMQLIFVK. Over 2689 to 2695 the chain is Cytoplasmic; sequence NMLFKHK. Residues 2696–2716 form a helical membrane-spanning segment; sequence FFFFVFFFVFLMYSFFKLFVI. The Extracellular segment spans residues 2717–2722; the sequence is HVCELR. The chain crosses the membrane as a helical span at residues 2723-2743; sequence ICCSILLILSINILYFWYSEY. The Cytoplasmic portion of the chain corresponds to 2744-3004; it reads LDRTQYIIKR…KLREQNKVKG (261 aa). The Guanylate cyclase 2 domain maps to 2793-2927; it reads AFLFADIVGF…LDVLIANHIE (135 aa). D2798, I2799, and D2842 together coordinate Mg(2+).

It in the N-terminal section; belongs to the cation transport ATPase (P-type) (TC 3.A.3) family. Type IV subfamily. The protein in the C-terminal section; belongs to the adenylyl cyclase class-4/guanylyl cyclase family. Mg(2+) serves as cofactor. Mn(2+) is required as a cofactor.

Its subcellular location is the membrane. It catalyses the reaction GTP = 3',5'-cyclic GMP + diphosphate. Functionally, catalyzes the synthesis of the second messenger cGMP from GTP. Probably by regulating cGMP production, required for ookinete gliding motility, which is necessary for the ookinete to traverse the midgut epithelium of the mosquito. In Plasmodium berghei (strain Anka), this protein is Guanylate cyclase beta.